The sequence spans 210 residues: Viral protein 1 (210 aa).

The sequence is that of Viral protein 1 from Chaetoceros (Chaetoceros sp. DNA virus 7).